Here is a 387-residue protein sequence, read N- to C-terminus: Acyl-CoA dehydrogenase FadE29 (387 aa).

FAD is bound by residues I123 to T126, T132, and T158. The active-site Proton acceptor is the E241. V367–E369 is a binding site for FAD.

This sequence belongs to the acyl-CoA dehydrogenase family. In terms of assembly, heterotetramer composed of FadE28 and FadE29. The cofactor is FAD.

The catalysed reaction is 3-oxochol-4-en-22-oyl-CoA + A = 3-oxochola-4,17-dien-22-oyl-CoA + AH2. It participates in steroid metabolism; cholesterol degradation. Involved in the third cycle of side chain dehydrogenation in the beta-oxidation of cholesterol catabolism. Contributes partly to the virulence by increasing the efficiency of beta-oxidation. Catalyzes the dehydrogenation of 2'-propanoyl-CoA ester side chains of 3-oxo-4-pregnene-20-carboxyl-CoA (3-OPC-CoA) to yield 3-oxo-4,17-pregnadiene-20-carboxyl-CoA (3-OPDC-CoA). Also able to dehydrogenate steroyl-CoA such as 3-oxo-chol-4-en-24-oyl-CoA (3-OCO-CoA), 1beta-(2'-propanoyl-CoA)-3a-alpha-H- 7a-beta-methylhexahydro-4-indanone (indanone-CoA ester), hexahydroindanone and pregenenone. The chain is Acyl-CoA dehydrogenase FadE29 (fadE29) from Mycobacterium tuberculosis (strain ATCC 25618 / H37Rv).